A 216-amino-acid polypeptide reads, in one-letter code: Phosducin-like protein 3 (216 aa).

The stretch at 13–59 (AKTIEQQLDQQLDRLDNLDSDDLKVLREQRLREMKDLNNKKQEWLRN) forms a coiled coil. A Phosducin domain is found at 29–163 (NLDSDDLKVL…DLGNCDDFAT (135 aa)).

The protein belongs to the phosducin family. As to expression, highly expressed in germline cells of the testis from the spermatogonia stage until the early spermatid stage but is no longer observed in late-stage spermatids in the distal end of the testis.

The enzyme catalyses [thioredoxin]-dithiol + NADP(+) = [thioredoxin]-disulfide + NADPH + H(+). In terms of biological role, has redox activity with thioredoxin. Required for male fertility and maturation of sperm past the canoe stage during spermiogenesis. The sequence is that of Phosducin-like protein 3 from Drosophila melanogaster (Fruit fly).